Consider the following 573-residue polypeptide: DNA polymerase lambda (573 aa).

Residues 35 to 131 enclose the BRCT domain; it reads EARGWLSSLR…RLTDTEGFSL (97 aa). 2 disordered regions span residues 126 to 204 and 214 to 233; these read TEGF…GPQV and TGHY…APEA. Residues 263–277 form a DNA-binding region; that stretch reads KAYSVQGDKWRALGY. Lysine 310 functions as the Schiff-base intermediate with DNA in the catalytic mechanism. Residues 343 to 346 form a DNA-binding region; it reads GTKT. DCTP-binding positions include arginine 384, 415 to 418, and 424 to 427; these read SYRR and GDVD. An involved in primer binding region spans residues 418–427; the sequence is RGKMTCGDVD. The Mn(2+) site is built by aspartate 425, aspartate 427, and aspartate 488. The DNA-binding stretch occupies residues 464–503; that stretch reads ENGQQQKYLGVCRLPGPGKRHRRLDIIVVPYCEFACALLY. Asparagine 511 serves as a coordination point for dCTP.

Belongs to the DNA polymerase type-X family. As to quaternary structure, interacts with PCNA. Interacts with PAXX; promoting POLL recruitment to double-strand breaks (DSBs) and stimulation of the end-filling activity of POLL. Interacts with XRCC4; promoting POLL recruitment to double-strand breaks (DSBs) and stimulation of the end-filling activity of POLL. Interacts with NHEJ1/XLF; promoting POLL recruitment to double-strand breaks (DSBs) and stimulation of the end-filling activity of POLL. It depends on Mn(2+) as a cofactor.

Its subcellular location is the nucleus. It catalyses the reaction DNA(n) + a 2'-deoxyribonucleoside 5'-triphosphate = DNA(n+1) + diphosphate. Functionally, DNA polymerase that functions in several pathways of DNA repair. Involved in base excision repair (BER) responsible for repair of lesions that give rise to abasic (AP) sites in DNA. Also contributes to DNA double-strand break repair by non-homologous end joining and homologous recombination. Has both template-dependent and template-independent (terminal transferase) DNA polymerase activities. Also has a 5'-deoxyribose-5-phosphate lyase (dRP lyase) activity. In Mus musculus (Mouse), this protein is DNA polymerase lambda.